The chain runs to 2506 residues: Highly reducing polyketide synthase rstn3 (2506 aa).

The 429-residue stretch at 8–436 folds into the Ketosynthase family 3 (KS3) domain; sequence VEPIAIVGMA…GANAHAILDA (429 aa). Active-site for beta-ketoacyl synthase activity residues include C183, H318, and H358. The 329-residue stretch at 547–875 folds into the Malonyl-CoA:ACP transacylase (MAT) domain; that stretch reads FIFTGQGAQW…KMVGSLFLSG (329 aa). Positions 941-1050 are N-terminal hotdog fold; it reads HDLLGSRLPG…ASDQSISSVE (110 aa). One can recognise a PKS/mFAS DH domain in the interval 941–1212; the sequence is HDLLGSRLPG…FSSLETAVGE (272 aa). H973 serves as the catalytic Proton acceptor; for dehydratase activity. The tract at residues 1060–1212 is C-terminal hotdog fold; sequence NKDSYDRRWY…FSSLETAVGE (153 aa). D1125 (proton donor; for dehydratase activity) is an active-site residue. The interval 1263-1563 is methyltransferase (CMet) domain; the sequence is VTRLAIRSSA…SGADIVLDDY (301 aa). The region spanning 1827–2093 is the Enoyl reductase (ER) domain; the sequence is GRVDSFYFKE…QDDYVGRVVL (267 aa). Residues 2116 to 2296 form the Ketoreductase (KR) domain; that stretch reads ASYLLIGCLG…QATSIALGMI (181 aa). The 79-residue stretch at 2423–2501 folds into the Carrier domain; the sequence is AVKVTTLGLI…DLAEKVVALA (79 aa). S2460 carries the post-translational modification O-(pantetheine 4'-phosphoryl)serine.

It depends on pantetheine 4'-phosphate as a cofactor.

The protein operates within antifungal biosynthesis. Highly reducing polyketide synthase; part of the gene cluster that mediates the biosynthesis of the tetrahydropyranyl antifungal agent restricticin that acts as an inhibitor of CYP51 and blocks the ergosterol biosynthesis. The highly reducing polyketide synthase rstn3, the short chain dehydrogenase rstn4, the cyclase rstn5, the FAD-dependent monooxygenase rstn6 and the enoylreductase rstn7 are required to generate the first stable intermediate desmethylrestrictinol. Rstn3 with rstn7 biosynthesize the first polyketide chain intermediate that is reduced by rstn4, followed by epoxidation by rstn6 before 6-endo cyclization via epoxide opening by rstn5 leads to desmethylrestrictinol. The methyltransferase rstn1 then catalyzes the C4 O-methylation of desmethylrestrictinol to produce restrictinol, and the nonribosomal peptide synthetase rstn8 catalyzes the C3 esterification of restrictinol with glycine that leads to restricticin. In Aspergillus nomiae NRRL (strain ATCC 15546 / NRRL 13137 / CBS 260.88 / M93), this protein is Highly reducing polyketide synthase rstn3.